The chain runs to 173 residues: Shikimate kinase 1 (173 aa).

14–19 (GAGKST) is an ATP binding site. Residue S18 participates in Mg(2+) binding. Substrate-binding residues include D36, R60, and G82. R120 contributes to the ATP binding site. Residue R140 participates in substrate binding. Q157 contacts ATP.

It belongs to the shikimate kinase family. Monomer. It depends on Mg(2+) as a cofactor.

Its subcellular location is the cytoplasm. It catalyses the reaction shikimate + ATP = 3-phosphoshikimate + ADP + H(+). It functions in the pathway metabolic intermediate biosynthesis; chorismate biosynthesis; chorismate from D-erythrose 4-phosphate and phosphoenolpyruvate: step 5/7. Functionally, catalyzes the specific phosphorylation of the 3-hydroxyl group of shikimic acid using ATP as a cosubstrate. The chain is Shikimate kinase 1 from Citrobacter koseri (strain ATCC BAA-895 / CDC 4225-83 / SGSC4696).